A 70-amino-acid polypeptide reads, in one-letter code: DNA gyrase inhibitor YacG (70 aa).

Positions 9, 12, 28, and 32 each coordinate Zn(2+). Residues 43–70 (ESRKIPGSSIDPESIVTSNNKQDNEDEQ) form a disordered region.

This sequence belongs to the DNA gyrase inhibitor YacG family. As to quaternary structure, interacts with GyrB. It depends on Zn(2+) as a cofactor.

Functionally, inhibits all the catalytic activities of DNA gyrase by preventing its interaction with DNA. Acts by binding directly to the C-terminal domain of GyrB, which probably disrupts DNA binding by the gyrase. This is DNA gyrase inhibitor YacG from Legionella pneumophila (strain Paris).